The following is a 202-amino-acid chain: Glycerol-3-phosphate acyltransferase (202 aa).

6 helical membrane-spanning segments follow: residues 2 to 22, 54 to 74, 85 to 105, 120 to 140, 141 to 161, and 162 to 182; these read MIIV…GFVI, FLVT…PLWL, FFTN…YPVY, VVLG…FIVL, KIFK…VIGS, and LIIQ…ILII.

It belongs to the PlsY family. In terms of assembly, probably interacts with PlsX.

It is found in the cell membrane. The catalysed reaction is an acyl phosphate + sn-glycerol 3-phosphate = a 1-acyl-sn-glycero-3-phosphate + phosphate. Its pathway is lipid metabolism; phospholipid metabolism. Its function is as follows. Catalyzes the transfer of an acyl group from acyl-phosphate (acyl-PO(4)) to glycerol-3-phosphate (G3P) to form lysophosphatidic acid (LPA). This enzyme utilizes acyl-phosphate as fatty acyl donor, but not acyl-CoA or acyl-ACP. This chain is Glycerol-3-phosphate acyltransferase, found in Staphylococcus aureus (strain Mu3 / ATCC 700698).